Reading from the N-terminus, the 455-residue chain is Phosphoglucosamine mutase (455 aa).

Ser-106 serves as the catalytic Phosphoserine intermediate. Ser-106, Asp-245, Asp-247, and Asp-249 together coordinate Mg(2+). At Ser-106 the chain carries Phosphoserine.

It belongs to the phosphohexose mutase family. It depends on Mg(2+) as a cofactor. In terms of processing, activated by phosphorylation.

The catalysed reaction is alpha-D-glucosamine 1-phosphate = D-glucosamine 6-phosphate. Functionally, catalyzes the conversion of glucosamine-6-phosphate to glucosamine-1-phosphate. The polypeptide is Phosphoglucosamine mutase (Acaryochloris marina (strain MBIC 11017)).